The sequence spans 847 residues: uncharacterized protein (847 aa).

The segment covering 116–126 (TGSSELTTSKT) has biased composition (polar residues). Disordered regions lie at residues 116-153 (TGSSELTTSKTPIDVDTKEQENRLKQKAEAAPKSTPIE), 208-245 (LKNFEDKSPPQAENASSSKKDEPISVECTDETSSRLSP), and 361-392 (DLEKNKESSSASLSTNKLAESPTEADKNSNVI). Residues 128–145 (IDVDTKEQENRLKQKAEA) show a composition bias toward basic and acidic residues. Over residues 368–378 (SSSASLSTNKL) the composition is skewed to polar residues.

This is an uncharacterized protein from Caenorhabditis elegans.